The primary structure comprises 151 residues: Transcriptional regulator MraZ (151 aa).

2 consecutive SpoVT-AbrB domains span residues 5-52 (ANAI…PLDE) and 81-124 (AVDL…DEDA).

Belongs to the MraZ family. As to quaternary structure, forms oligomers.

It localises to the cytoplasm. The protein resides in the nucleoid. This Pseudomonas fluorescens (strain ATCC BAA-477 / NRRL B-23932 / Pf-5) protein is Transcriptional regulator MraZ.